Consider the following 140-residue polypeptide: Organic hydroperoxide resistance protein-like (140 aa).

This sequence belongs to the OsmC/Ohr family.

The polypeptide is Organic hydroperoxide resistance protein-like (Staphylococcus aureus (strain bovine RF122 / ET3-1)).